Here is a 693-residue protein sequence, read N- to C-terminus: Elongation factor G (693 aa).

In terms of domain architecture, tr-type G spans 8–282 (EHTRNIGIMA…AVIDFMPSPT (275 aa)). Residues 17–24 (AHIDAGKT), 81–85 (DTPGH), and 135–138 (NKMD) contribute to the GTP site.

The protein belongs to the TRAFAC class translation factor GTPase superfamily. Classic translation factor GTPase family. EF-G/EF-2 subfamily.

The protein localises to the cytoplasm. In terms of biological role, catalyzes the GTP-dependent ribosomal translocation step during translation elongation. During this step, the ribosome changes from the pre-translocational (PRE) to the post-translocational (POST) state as the newly formed A-site-bound peptidyl-tRNA and P-site-bound deacylated tRNA move to the P and E sites, respectively. Catalyzes the coordinated movement of the two tRNA molecules, the mRNA and conformational changes in the ribosome. This is Elongation factor G from Ruminiclostridium cellulolyticum (strain ATCC 35319 / DSM 5812 / JCM 6584 / H10) (Clostridium cellulolyticum).